We begin with the raw amino-acid sequence, 285 residues long: Nucleotide-binding protein HI_1146 (285 aa).

8 to 15 (GRSGAGKS) serves as a coordination point for ATP. 56–59 (DIRN) contributes to the GTP binding site.

This sequence belongs to the RapZ-like family.

Functionally, displays ATPase and GTPase activities. This is Nucleotide-binding protein HI_1146 from Haemophilus influenzae (strain ATCC 51907 / DSM 11121 / KW20 / Rd).